The primary structure comprises 329 residues: Phenylalanine--tRNA ligase alpha subunit (329 aa).

Glu253 contacts Mg(2+).

The protein belongs to the class-II aminoacyl-tRNA synthetase family. Phe-tRNA synthetase alpha subunit type 1 subfamily. Tetramer of two alpha and two beta subunits. It depends on Mg(2+) as a cofactor.

The protein resides in the cytoplasm. The catalysed reaction is tRNA(Phe) + L-phenylalanine + ATP = L-phenylalanyl-tRNA(Phe) + AMP + diphosphate + H(+). The protein is Phenylalanine--tRNA ligase alpha subunit of Teredinibacter turnerae (strain ATCC 39867 / T7901).